Here is a 381-residue protein sequence, read N- to C-terminus: 2-epi-5-epi-valiolone synthase (381 aa).

NAD(+)-binding positions include Asp-50, 81-84, 114-118, 138-139, Lys-151, Lys-160, and 178-181; these read EEAK, GIVLD, TS, and FLDT. Lys-151 is an active-site residue. Residues Glu-193, His-264, and His-280 each contribute to the a divalent metal cation site.

Belongs to the sugar phosphate cyclases superfamily. EEVS family. NAD(+) is required as a cofactor. It depends on Co(2+) as a cofactor.

It carries out the reaction D-sedoheptulose 7-phosphate = 2-epi-5-epi-valiolone + phosphate. It participates in antibiotic biosynthesis. In terms of biological role, catalyzes the cyclization of D-sedoheptulose 7-phosphate to 2-epi-5-epi-valiolone. Involved in cetoniacytone A biosynthesis. In Actinomyces sp, this protein is 2-epi-5-epi-valiolone synthase.